The following is a 1051-amino-acid chain: Ubiquitin-activating enzyme E1 2 (1051 aa).

Residues 1–32 (MLPRKREIVAGEVEDLQKKTRAGEGEATREEG) are compositionally biased toward basic and acidic residues. The disordered stretch occupies residues 1 to 42 (MLPRKREIVAGEVEDLQKKTRAGEGEATREEGDAAMAGRGNE). 2 consecutive repeat copies span residues 56 to 194 (GRET…GSVF) and 453 to 605 (GSTL…QMVI). The interval 56–605 (GRETMKPLFG…GAKCNTQMVI (550 aa)) is 2 approximate repeats. Residues Ala-472, Asp-498, Arg-509, Lys-522, and 570–571 (DN) contribute to the ATP site. Cys-626 acts as the Glycyl thioester intermediate in catalysis.

This sequence belongs to the ubiquitin-activating E1 family. In terms of assembly, monomer.

It carries out the reaction ATP + ubiquitin + [E1 ubiquitin-activating enzyme]-L-cysteine = AMP + diphosphate + S-ubiquitinyl-[E1 ubiquitin-activating enzyme]-L-cysteine.. It participates in protein modification; protein ubiquitination. Functionally, activates ubiquitin by first adenylating its C-terminal glycine residue with ATP, and thereafter linking this residue to the side chain of a cysteine residue in E1, yielding a ubiquitin-E1 thioester and free AMP. The sequence is that of Ubiquitin-activating enzyme E1 2 (UBA2) from Triticum aestivum (Wheat).